We begin with the raw amino-acid sequence, 437 residues long: Amino-acid acetyltransferase (437 aa).

Positions E289–N437 constitute an N-acetyltransferase domain.

The protein belongs to the acetyltransferase family. ArgA subfamily.

The protein resides in the cytoplasm. The catalysed reaction is L-glutamate + acetyl-CoA = N-acetyl-L-glutamate + CoA + H(+). It participates in amino-acid biosynthesis; L-arginine biosynthesis; N(2)-acetyl-L-ornithine from L-glutamate: step 1/4. This is Amino-acid acetyltransferase from Haemophilus ducreyi (strain 35000HP / ATCC 700724).